We begin with the raw amino-acid sequence, 604 residues long: Prostaglandin G/H synthase 2 (604 aa).

An N-terminal signal peptide occupies residues 1–17 (MLARALLLCAAVALSGA). An EGF-like domain is found at 18 to 55 (ANPCCSHPCQNRGVCMSVGFDQYKCDCTRTGFYGENCT). 4 disulfide bridges follow: C21-C32, C22-C145, C26-C42, and C44-C54. N53 carries an N-linked (GlcNAc...) asparagine glycan. A substrate-binding site is contributed by R106. N130 carries an N-linked (GlcNAc...) asparagine glycan. The active-site Proton acceptor is the H193. Y341 is a substrate binding site. Residue Y371 is the For cyclooxygenase activity of the active site. Heme b is bound at residue H374. N-linked (GlcNAc...) asparagine glycosylation occurs at N396. C526 is modified (S-nitrosocysteine). C555 and C561 are disulfide-bonded. At S565 the chain carries O-acetylserine. An N-linked (GlcNAc...) asparagine glycan is attached at N580.

This sequence belongs to the prostaglandin G/H synthase family. As to quaternary structure, homodimer. The cofactor is heme b. Post-translationally, S-nitrosylation by NOS2 (iNOS) activates enzyme activity. S-nitrosylation may take place on different Cys residues in addition to Cys-526. In terms of processing, acetylated at Ser-565 by SPHK1. During neuroinflammation, acetylation by SPHK1 promotes neuronal secretion of specialized preresolving mediators (SPMs), especially 15-R-lipoxin A4, which results in an increase of phagocytic microglia.

It localises to the microsome membrane. The protein localises to the endoplasmic reticulum membrane. It is found in the nucleus inner membrane. Its subcellular location is the nucleus outer membrane. It carries out the reaction (5Z,8Z,11Z,14Z)-eicosatetraenoate + AH2 + 2 O2 = prostaglandin H2 + A + H2O. The catalysed reaction is (5Z,8Z,11Z,14Z)-eicosatetraenoate + 2 O2 = prostaglandin G2. It catalyses the reaction prostaglandin G2 + AH2 = prostaglandin H2 + A + H2O. The enzyme catalyses (5Z,8Z,11Z,14Z,17Z)-eicosapentaenoate + 2 O2 = prostaglandin G3. It carries out the reaction prostaglandin G3 + AH2 = prostaglandin H3 + A + H2O. The catalysed reaction is (8Z,11Z,14Z)-eicosatrienoate + 2 O2 = prostaglandin G1. It catalyses the reaction prostaglandin G1 + AH2 = prostaglandin H1 + A + H2O. The enzyme catalyses 2-(5Z,8Z,11Z,14Z)-eicosatetraenoyl-sn-glycero-3-phosphoethanolamine + 2 O2 = 2-(prostaglandin G2)-sn-glycero-3-phosphoethanolamine. It carries out the reaction 2-(prostaglandin G2)-sn-glycero-3-phosphoethanolamine + AH2 = 2-(prostaglandin H2)-sn-glycero-3-phosphoethanolamine + A + H2O. The catalysed reaction is 2-(5Z,8Z,11Z,14Z)-eicosatetraenoyl-sn-glycero-3-phosphocholine + 2 O2 = 2-(prostaglandin G2)-sn-glycero-3-phosphocholine. It catalyses the reaction 2-(prostaglandin G2)-sn-glycero-3-phosphocholine + AH2 = 2-(prostaglandin H2)-sn-glycero-3-phosphocholine + A + H2O. The enzyme catalyses (15S)-hydroperoxy-(5Z,8Z,11Z,13E)-eicosatetraenoate + AH2 = (15S)-hydroxy-(5Z,8Z,11Z,13E)-eicosatetraenoate + A + H2O. It carries out the reaction 2-(5Z,8Z,11Z,14Z)-eicosatetraenoyl-sn-glycero-3-phosphocholine + AH2 + O2 = 2-[(15S)-hydroxy-(5Z,8Z,11Z,13E)-eicosatetraenoyl]-sn-glycero-3-phosphocholine + A + H2O. The catalysed reaction is 2-(5Z,8Z,11Z,14Z)-eicosatetraenoyl-sn-glycero-3-phosphocholine + AH2 + O2 = 2-[(15R)-hydroxy-(5Z,8Z,11Z,13E)-eicosatetraenoyl]-sn-glycero-3-phosphocholine + A + H2O. It catalyses the reaction 2-(5Z,8Z,11Z,14Z)-eicosatetraenoyl-sn-glycero-3-phosphocholine + AH2 + O2 = 2-[(11R)-hydroxy-(5Z,8Z,12E,14Z)-eicosatetraenoyl]-sn-glycero-3-phosphocholine + A + H2O. The enzyme catalyses (9Z,12Z)-octadecadienoate + AH2 + O2 = 9-hydroxy-(10E,12Z)-octadecadienoate + A + H2O. It carries out the reaction (9Z,12Z)-octadecadienoate + AH2 + O2 = 13-hydroxy-(9Z,11E)-octadecadienoate + A + H2O. The catalysed reaction is (5Z,8Z,11Z,14Z)-eicosatetraenoate + AH2 + O2 = (15R)-hydroxy-(5Z,8Z,11Z,13E)-eicosatetraenoate + A + H2O. It catalyses the reaction (5Z,8Z,11Z,14Z)-eicosatetraenoate + AH2 + O2 = (11R)-hydroxy-(5Z,8Z,12E,14Z)-eicosatetraenoate + A + H2O. The enzyme catalyses (5Z,8Z,11Z,14Z,17Z)-eicosapentaenoate + AH2 + O2 = (11R)-hydroxy-(5Z,8Z,12E,14Z,17Z)-eicosapentaenoate + A + H2O. It carries out the reaction (5Z,8Z,11Z,14Z,17Z)-eicosapentaenoate + AH2 + O2 = (18S)-hydroxy-(5Z,8Z,11Z,14Z,16E)-eicosapentaenoate + A + H2O. The catalysed reaction is (5Z,8Z,11Z,14Z,17Z)-eicosapentaenoate + AH2 + O2 = (18R)-hydroxy-(5Z,8Z,11Z,14Z,16E)-eicosapentaenoate + A + H2O. It catalyses the reaction (5Z,8Z,11Z,14Z,17Z)-eicosapentaenoate + AH2 + O2 = (15R)-hydroxy-(5Z,8Z,11Z,13E,17Z)-eicosapentaenoate + A + H2O. The enzyme catalyses (5Z,8Z,11Z,14Z,17Z)-eicosapentaenoate + AH2 + O2 = (15S)-hydroxy-(5Z,8Z,11Z,13E,17Z)-eicosapentaenoate + A + H2O. It carries out the reaction (7Z,10Z,13Z,16Z,19Z)-docosapentaenoate + AH2 + O2 = 13R-hydroxy-(7Z,10Z,14E,16Z,19Z)-docosapentaenoate + A + H2O. The catalysed reaction is (4Z,7Z,10Z,13Z,16Z,19Z)-docosahexaenoate + AH2 + O2 = 13-hydroxy-(4Z,7Z,10Z,14E,16Z,19Z)-docosahexaenoate + A + H2O. It catalyses the reaction (5S)-hydroxy-(6E,8Z,11Z,14Z)-eicosatetraenoate + AH2 + O2 = (5S,15R)-dihydroxy-(6E,8Z,11Z,13E)-eicosatetraenoate + A + H2O. The enzyme catalyses (4Z,7Z,10Z,13Z,16Z,19Z)-docosahexaenoate + AH2 + O2 = 17R-hydroxy-(4Z,7Z,10Z,13Z,15E,19Z)-docosahexaenoate + A + H2O. It carries out the reaction (5S)-hydroxy-(6E,8Z,11Z,14Z)-eicosatetraenoate + AH2 + O2 = (5S,15S)-dihydroxy-(6E,8Z,11Z,13E)-eicosatetraenoate + A + H2O. The catalysed reaction is (5S)-hydroxy-(6E,8Z,11Z,14Z)-eicosatetraenoate + AH2 + O2 = (5S,11R)-dihydroxy-(6E,8Z,12E,14Z)-eicosatetraenoate + A + H2O. It catalyses the reaction 2-(5Z,8Z,11Z,14Z-eicosatetraenoyl)-glycerol + 2 O2 = 2-glyceryl-prostaglandin G2. The enzyme catalyses 2-glyceryl-prostaglandin G2 + AH2 = 2-glyceryl-prostaglandin H2 + A + H2O. It carries out the reaction (5Z,8Z,11Z,14Z)-eicosatetraenoate + O2 = (15R)-hydroperoxy-(5Z,8Z,11Z,13E)-eicosatetraenoate. The catalysed reaction is (5Z,8Z,11Z,14Z)-eicosatetraenoate + O2 = 11R-hydroperoxy-(5Z,8Z,12E,14Z)-eicosatetraenoate. It catalyses the reaction (9Z,12Z)-octadecadienoate + AH2 + O2 = (9R)-hydroxy-(10E,12Z)-octadecadienoate + A + H2O. The enzyme catalyses (9Z,12Z)-octadecadienoate + AH2 + O2 = (9S)-hydroxy-(10E,12Z)-octadecadienoate + A + H2O. It carries out the reaction (9Z,12Z)-octadecadienoate + AH2 + O2 = (13S)-hydroxy-(9Z,11E)-octadecadienoate + A + H2O. The catalysed reaction is (9Z,12Z)-octadecadienoate + AH2 + O2 = (13R)-hydroxy-(9Z,11E)-octadecadienoate + A + H2O. Its pathway is lipid metabolism; prostaglandin biosynthesis. In terms of biological role, dual cyclooxygenase and peroxidase in the biosynthesis pathway of prostanoids, a class of C20 oxylipins mainly derived from arachidonate ((5Z,8Z,11Z,14Z)-eicosatetraenoate, AA, C20:4(n-6)), with a particular role in the inflammatory response. The cyclooxygenase activity oxygenates AA to the hydroperoxy endoperoxide prostaglandin G2 (PGG2), and the peroxidase activity reduces PGG2 to the hydroxy endoperoxide prostaglandin H2 (PGH2), the precursor of all 2-series prostaglandins and thromboxanes. This complex transformation is initiated by abstraction of hydrogen at carbon 13 (with S-stereochemistry), followed by insertion of molecular O2 to form the endoperoxide bridge between carbon 9 and 11 that defines prostaglandins. The insertion of a second molecule of O2 (bis-oxygenase activity) yields a hydroperoxy group in PGG2 that is then reduced to PGH2 by two electrons. Similarly catalyzes successive cyclooxygenation and peroxidation of dihomo-gamma-linoleate (DGLA, C20:3(n-6)) and eicosapentaenoate (EPA, C20:5(n-3)) to corresponding PGH1 and PGH3, the precursors of 1- and 3-series prostaglandins. In an alternative pathway of prostanoid biosynthesis, converts 2-arachidonoyl lysophopholipids to prostanoid lysophopholipids, which are then hydrolyzed by intracellular phospholipases to release free prostanoids. Metabolizes 2-arachidonoyl glycerol yielding the glyceryl ester of PGH2, a process that can contribute to pain response. Generates lipid mediators from n-3 and n-6 polyunsaturated fatty acids (PUFAs) via a lipoxygenase-type mechanism. Oxygenates PUFAs to hydroperoxy compounds and then reduces them to corresponding alcohols. Plays a role in the generation of resolution phase interaction products (resolvins) during both sterile and infectious inflammation. Metabolizes docosahexaenoate (DHA, C22:6(n-3)) to 17R-HDHA, a precursor of the D-series resolvins (RvDs). As a component of the biosynthetic pathway of E-series resolvins (RvEs), converts eicosapentaenoate (EPA, C20:5(n-3)) primarily to 18S-HEPE that is further metabolized by ALOX5 and LTA4H to generate 18S-RvE1 and 18S-RvE2. In vascular endothelial cells, converts docosapentaenoate (DPA, C22:5(n-3)) to 13R-HDPA, a precursor for 13-series resolvins (RvTs) shown to activate macrophage phagocytosis during bacterial infection. In activated leukocytes, contributes to oxygenation of hydroxyeicosatetraenoates (HETE) to diHETES (5,15-diHETE and 5,11-diHETE). Can also use linoleate (LA, (9Z,12Z)-octadecadienoate, C18:2(n-6)) as substrate and produce hydroxyoctadecadienoates (HODEs) in a regio- and stereospecific manner, being (9R)-HODE ((9R)-hydroxy-(10E,12Z)-octadecadienoate) and (13S)-HODE ((13S)-hydroxy-(9Z,11E)-octadecadienoate) its major products. During neuroinflammation, plays a role in neuronal secretion of specialized preresolving mediators (SPMs) 15R-lipoxin A4 that regulates phagocytic microglia. This is Prostaglandin G/H synthase 2 (PTGS2) from Bos taurus (Bovine).